The chain runs to 136 residues: MPARRKARKRALDVLFEADLRGRPPVEVLAGYVERIEKPRPEHLGYAVGLVEGVAARLDRVDELIASYAEGWTLDRMPTVDRNLARIAVYELLYVDEIDDAVAISEAVELARQMSTDDSPRFLNGLLGRIAEYATR.

It belongs to the NusB family.

In terms of biological role, involved in transcription antitermination. Required for transcription of ribosomal RNA (rRNA) genes. Binds specifically to the boxA antiterminator sequence of the ribosomal RNA (rrn) operons. This Salinispora tropica (strain ATCC BAA-916 / DSM 44818 / JCM 13857 / NBRC 105044 / CNB-440) protein is Transcription antitermination protein NusB.